Reading from the N-terminus, the 505-residue chain is Apolipoprotein N-acyltransferase (505 aa).

The next 7 membrane-spanning stretches (helical) occupy residues 6 to 26, 29 to 49, 53 to 73, 80 to 100, 119 to 139, 152 to 172, and 189 to 209; these read PSIL…CLAF, FDIW…ATLV, TAML…VQWV, FGGV…SYLG, FVLA…FTGF, PFAQ…VILL, and TFTK…LQFV. The region spanning 223-469 is the CN hydrolase domain; the sequence is IQANIEQQLK…TNTLTAEIAT (247 aa). Glutamate 263 acts as the Proton acceptor in catalysis. Lysine 328 is a catalytic residue. Catalysis depends on cysteine 379, which acts as the Nucleophile. Residues 475–495 form a helical membrane-spanning segment; it reads LFGQFGHWLIYSLSFICVAFG.

The protein belongs to the CN hydrolase family. Apolipoprotein N-acyltransferase subfamily.

The protein resides in the cell inner membrane. It catalyses the reaction N-terminal S-1,2-diacyl-sn-glyceryl-L-cysteinyl-[lipoprotein] + a glycerophospholipid = N-acyl-S-1,2-diacyl-sn-glyceryl-L-cysteinyl-[lipoprotein] + a 2-acyl-sn-glycero-3-phospholipid + H(+). It functions in the pathway protein modification; lipoprotein biosynthesis (N-acyl transfer). Catalyzes the phospholipid dependent N-acylation of the N-terminal cysteine of apolipoprotein, the last step in lipoprotein maturation. This Haemophilus ducreyi (strain 35000HP / ATCC 700724) protein is Apolipoprotein N-acyltransferase.